The chain runs to 114 residues: Fluoride-specific ion channel FluC 1 (114 aa).

The next 3 membrane-spanning stretches (helical) occupy residues Val-28 to His-48, Ile-56 to Val-76, and Ile-91 to Leu-111. Residues Gly-66 and Thr-69 each coordinate Na(+).

This sequence belongs to the fluoride channel Fluc/FEX (TC 1.A.43) family.

The protein resides in the cell membrane. The catalysed reaction is fluoride(in) = fluoride(out). With respect to regulation, na(+) is not transported, but it plays an essential structural role and its presence is essential for fluoride channel function. Functionally, fluoride-specific ion channel. Important for reducing fluoride concentration in the cell, thus reducing its toxicity. The polypeptide is Fluoride-specific ion channel FluC 1 (Ligilactobacillus salivarius (strain UCC118) (Lactobacillus salivarius)).